Consider the following 180-residue polypeptide: Vacuolar ATPase assembly protein VMA22 (180 aa).

The stretch at 4-38 (QALREELDSKCLQLLSDLEELEAKRAALNARVEEG) forms a coiled coil. The segment at 90-113 (TPEEVGPSEASLRRRKGPTKTKEL) is disordered.

As to quaternary structure, accessory component of the multisubunit proton-transporting vacuolar (V)-ATPase protein pump. Predominantly expressed in the heart, liver, kidney and testis and at lower levels in the brain and lung. Undetectable in the spleen and muscles.

Its subcellular location is the endosome. The protein resides in the lysosome. It is found in the endoplasmic reticulum-Golgi intermediate compartment. The protein localises to the cytoplasmic vesicle. It localises to the COPI-coated vesicle. Its subcellular location is the endoplasmic reticulum. In terms of biological role, accessory component of the proton-transporting vacuolar (V)-ATPase protein pump involved in intracellular iron homeostasis. In aerobic conditions, required for intracellular iron homeostasis, thus triggering the activity of Fe(2+) prolyl hydroxylase (PHD) enzymes, and leading to HIF1A hydroxylation and subsequent proteasomal degradation. Necessary for endolysosomal acidification and lysosomal degradation. May be involved in Golgi homeostasis. This Mus musculus (Mouse) protein is Vacuolar ATPase assembly protein VMA22 (Vma22).